Consider the following 400-residue polypeptide: Glutamyl-tRNA reductase (400 aa).

Residues 45-48 (TCNR), serine 103, 108-110 (EDQ), and glutamine 114 each bind substrate. The active-site Nucleophile is cysteine 46. Residue 179–184 (GYGEIG) participates in NADP(+) binding.

It belongs to the glutamyl-tRNA reductase family. In terms of assembly, homodimer.

It catalyses the reaction (S)-4-amino-5-oxopentanoate + tRNA(Glu) + NADP(+) = L-glutamyl-tRNA(Glu) + NADPH + H(+). The protein operates within porphyrin-containing compound metabolism; protoporphyrin-IX biosynthesis; 5-aminolevulinate from L-glutamyl-tRNA(Glu): step 1/2. In terms of biological role, catalyzes the NADPH-dependent reduction of glutamyl-tRNA(Glu) to glutamate 1-semialdehyde (GSA). The polypeptide is Glutamyl-tRNA reductase (Clostridium perfringens (strain SM101 / Type A)).